A 299-amino-acid polypeptide reads, in one-letter code: Putative fructokinase (299 aa).

T130 provides a ligand contact to ATP. The Zn(2+) site is built by H153, C168, H171, and C174. ATP-binding positions include P182 and 230–234 (GVMQQ).

This sequence belongs to the ROK (NagC/XylR) family. Mg(2+) serves as cofactor.

It catalyses the reaction D-fructose + ATP = D-fructose 6-phosphate + ADP + H(+). Its activity is regulated as follows. Inhibited by zinc ions. Seems to be involved in the degradation of glucomannan. This Bacillus subtilis (strain 168) protein is Putative fructokinase (gmuE).